Reading from the N-terminus, the 425-residue chain is 3-phosphoshikimate 1-carboxyvinyltransferase (425 aa).

Positions 22, 23, and 27 each coordinate 3-phosphoshikimate. Position 22 (lysine 22) interacts with phosphoenolpyruvate. The phosphoenolpyruvate site is built by glycine 95 and arginine 123. The 3-phosphoshikimate site is built by serine 169, serine 170, glutamine 171, serine 197, aspartate 313, asparagine 336, and lysine 340. Glutamine 171 lines the phosphoenolpyruvate pocket. Residue aspartate 313 is the Proton acceptor of the active site. The phosphoenolpyruvate site is built by arginine 344, arginine 386, and lysine 411.

Belongs to the EPSP synthase family. As to quaternary structure, monomer.

The protein resides in the cytoplasm. It catalyses the reaction 3-phosphoshikimate + phosphoenolpyruvate = 5-O-(1-carboxyvinyl)-3-phosphoshikimate + phosphate. It functions in the pathway metabolic intermediate biosynthesis; chorismate biosynthesis; chorismate from D-erythrose 4-phosphate and phosphoenolpyruvate: step 6/7. Catalyzes the transfer of the enolpyruvyl moiety of phosphoenolpyruvate (PEP) to the 5-hydroxyl of shikimate-3-phosphate (S3P) to produce enolpyruvyl shikimate-3-phosphate and inorganic phosphate. The protein is 3-phosphoshikimate 1-carboxyvinyltransferase of Marinomonas sp. (strain MWYL1).